The chain runs to 269 residues: Putative hydro-lyase Atu3911 (269 aa).

This sequence belongs to the D-glutamate cyclase family.

The sequence is that of Putative hydro-lyase Atu3911 from Agrobacterium fabrum (strain C58 / ATCC 33970) (Agrobacterium tumefaciens (strain C58)).